The sequence spans 486 residues: Cysteine--tRNA ligase (486 aa).

Cys29 provides a ligand contact to Zn(2+). The 'HIGH' region signature appears at 31 to 41 (ITVYDYCHLGH). 3 residues coordinate Zn(2+): Cys215, His240, and Glu244. The 'KMSKS' region signature appears at 272–276 (KMSKS). Lys275 is a binding site for ATP.

Belongs to the class-I aminoacyl-tRNA synthetase family. In terms of assembly, monomer. It depends on Zn(2+) as a cofactor.

Its subcellular location is the cytoplasm. It catalyses the reaction tRNA(Cys) + L-cysteine + ATP = L-cysteinyl-tRNA(Cys) + AMP + diphosphate. This is Cysteine--tRNA ligase from Gloeothece citriformis (strain PCC 7424) (Cyanothece sp. (strain PCC 7424)).